The following is a 150-amino-acid chain: FAD synthase (150 aa).

Residues 11-12 (TF), 16-19 (HPGH), D96, and Y124 contribute to the ATP site.

Belongs to the archaeal FAD synthase family. As to quaternary structure, homodimer. A divalent metal cation serves as cofactor.

The catalysed reaction is FMN + ATP + H(+) = FAD + diphosphate. It participates in cofactor biosynthesis; FAD biosynthesis; FAD from FMN: step 1/1. Catalyzes the transfer of the AMP portion of ATP to flavin mononucleotide (FMN) to produce flavin adenine dinucleotide (FAD) coenzyme. The sequence is that of FAD synthase from Methanocaldococcus fervens (strain DSM 4213 / JCM 15782 / AG86) (Methanococcus fervens).